A 336-amino-acid chain; its full sequence is Glucokinase (336 aa).

ATP is bound at residue 12-17 (ADIGGT).

The protein belongs to the bacterial glucokinase family.

The protein localises to the cytoplasm. The catalysed reaction is D-glucose + ATP = D-glucose 6-phosphate + ADP + H(+). In Helicobacter pylori (strain ATCC 700392 / 26695) (Campylobacter pylori), this protein is Glucokinase.